A 355-amino-acid polypeptide reads, in one-letter code: Holliday junction branch migration complex subunit RuvB (355 aa).

Residues 1–43 (MEEMDDFTVRRGEREDITGAAGPPEERPLDPAAFEEDDEPTLR) form a disordered region. The segment at 4 to 203 (MDDFTVRRGE…FGFSARLDYY (200 aa)) is large ATPase domain (RuvB-L). The span at 7–17 (FTVRRGEREDI) shows a compositional bias: basic and acidic residues. ATP contacts are provided by residues leucine 42, arginine 43, glycine 84, lysine 87, threonine 88, serine 89, 150 to 152 (EDF), arginine 193, tyrosine 203, and arginine 240. Threonine 88 contributes to the Mg(2+) binding site. The segment at 204–274 (EPHELEKIVV…TANAALEMQG (71 aa)) is small ATPAse domain (RuvB-S). Positions 277–355 (HLGLDRTDRE…HLGFPVRDGG (79 aa)) are head domain (RuvB-H). DNA-binding residues include arginine 313, arginine 332, and arginine 337.

This sequence belongs to the RuvB family. In terms of assembly, homohexamer. Forms an RuvA(8)-RuvB(12)-Holliday junction (HJ) complex. HJ DNA is sandwiched between 2 RuvA tetramers; dsDNA enters through RuvA and exits via RuvB. An RuvB hexamer assembles on each DNA strand where it exits the tetramer. Each RuvB hexamer is contacted by two RuvA subunits (via domain III) on 2 adjacent RuvB subunits; this complex drives branch migration. In the full resolvosome a probable DNA-RuvA(4)-RuvB(12)-RuvC(2) complex forms which resolves the HJ.

The protein resides in the cytoplasm. The enzyme catalyses ATP + H2O = ADP + phosphate + H(+). Its function is as follows. The RuvA-RuvB-RuvC complex processes Holliday junction (HJ) DNA during genetic recombination and DNA repair, while the RuvA-RuvB complex plays an important role in the rescue of blocked DNA replication forks via replication fork reversal (RFR). RuvA specifically binds to HJ cruciform DNA, conferring on it an open structure. The RuvB hexamer acts as an ATP-dependent pump, pulling dsDNA into and through the RuvAB complex. RuvB forms 2 homohexamers on either side of HJ DNA bound by 1 or 2 RuvA tetramers; 4 subunits per hexamer contact DNA at a time. Coordinated motions by a converter formed by DNA-disengaged RuvB subunits stimulates ATP hydrolysis and nucleotide exchange. Immobilization of the converter enables RuvB to convert the ATP-contained energy into a lever motion, pulling 2 nucleotides of DNA out of the RuvA tetramer per ATP hydrolyzed, thus driving DNA branch migration. The RuvB motors rotate together with the DNA substrate, which together with the progressing nucleotide cycle form the mechanistic basis for DNA recombination by continuous HJ branch migration. Branch migration allows RuvC to scan DNA until it finds its consensus sequence, where it cleaves and resolves cruciform DNA. This chain is Holliday junction branch migration complex subunit RuvB, found in Rubrobacter xylanophilus (strain DSM 9941 / JCM 11954 / NBRC 16129 / PRD-1).